Reading from the N-terminus, the 220-residue chain is Ripening-related protein grip22 (220 aa).

An N-terminal signal peptide occupies residues 1–27 (MAKSALVWLASVCLVFNILSLPFLALG).

This sequence belongs to the kiwellin family. Expressed in ripening fruits.

The protein resides in the secreted. The protein is Ripening-related protein grip22 (grip22) of Vitis vinifera (Grape).